The following is a 45-amino-acid chain: Alpha-conotoxin-like Lp1.10 (45 aa).

The propeptide occupies 1–27 (VVLGPASDGRNAAANVKAPDLIALTVR). 2 disulfide bridges follow: C30/C36 and C31/C44. The interval 32–34 (HNA) is lacks the Ser-Xaa-Pro motif that is crucial for potent interaction with nAChR. C44 carries the cysteine amide modification.

Belongs to the conotoxin A superfamily. Expressed by the venom duct.

Its subcellular location is the secreted. Its function is as follows. Alpha-conotoxins act on postsynaptic membranes, they bind to the nicotinic acetylcholine receptors (nAChR) and thus inhibit them. Has possibly a distinct nAChR binding mode from other alpha-conotoxins, due to a different three residue motif (lacks the Ser-Xaa-Pro motif). In Conus leopardus (Leopard cone), this protein is Alpha-conotoxin-like Lp1.10.